Here is a 156-residue protein sequence, read N- to C-terminus: Putative type II restriction enzyme ApeKORF2002P (156 aa).

It to M.jannaschii MJ1199.

It catalyses the reaction Endonucleolytic cleavage of DNA to give specific double-stranded fragments with terminal 5'-phosphates.. A putative type II restriction enzyme, its methylase would be APE_2002. The chain is Putative type II restriction enzyme ApeKORF2002P from Aeropyrum pernix (strain ATCC 700893 / DSM 11879 / JCM 9820 / NBRC 100138 / K1).